The following is a 177-amino-acid chain: Large ribosomal subunit protein uL6 (177 aa).

It belongs to the universal ribosomal protein uL6 family. As to quaternary structure, part of the 50S ribosomal subunit.

This protein binds to the 23S rRNA, and is important in its secondary structure. It is located near the subunit interface in the base of the L7/L12 stalk, and near the tRNA binding site of the peptidyltransferase center. The polypeptide is Large ribosomal subunit protein uL6 (Bordetella pertussis (strain Tohama I / ATCC BAA-589 / NCTC 13251)).